The primary structure comprises 472 residues: Adenosylhomocysteinase (472 aa).

3 residues coordinate substrate: T61, D139, and E198. 199-201 (TTT) serves as a coordination point for NAD(+). 2 residues coordinate substrate: K228 and D232. Residues N233, 262-267 (GFGDVG), E285, N320, 341-343 (IGH), and N386 contribute to the NAD(+) site.

The protein belongs to the adenosylhomocysteinase family. Requires NAD(+) as cofactor.

It is found in the cytoplasm. It catalyses the reaction S-adenosyl-L-homocysteine + H2O = L-homocysteine + adenosine. Its pathway is amino-acid biosynthesis; L-homocysteine biosynthesis; L-homocysteine from S-adenosyl-L-homocysteine: step 1/1. May play a key role in the regulation of the intracellular concentration of adenosylhomocysteine. The chain is Adenosylhomocysteinase from Sphingopyxis alaskensis (strain DSM 13593 / LMG 18877 / RB2256) (Sphingomonas alaskensis).